We begin with the raw amino-acid sequence, 379 residues long: Alcohol dehydrogenase 2 (379 aa).

Residues Cys47, Thr49, His69, Cys99, Cys102, Cys105, Cys113, and Cys177 each contribute to the Zn(2+) site. Positions 49 and 69 each coordinate an alcohol. Thr49 provides a ligand contact to NAD(+). Residues 202–207 (GLGAVG), Asp226, Lys231, Thr272, Val295, 295–297 (VGV), Phe322, and Arg372 contribute to the NAD(+) site.

This sequence belongs to the zinc-containing alcohol dehydrogenase family. As to quaternary structure, homodimer. Zn(2+) serves as cofactor.

The protein resides in the cytoplasm. The enzyme catalyses a primary alcohol + NAD(+) = an aldehyde + NADH + H(+). It catalyses the reaction a secondary alcohol + NAD(+) = a ketone + NADH + H(+). The protein is Alcohol dehydrogenase 2 (ADH2) of Oryza sativa subsp. indica (Rice).